A 1037-amino-acid polypeptide reads, in one-letter code: Glycine dehydrogenase (decarboxylating) A, mitochondrial (1037 aa).

A mitochondrion-targeting transit peptide spans 1–66; the sequence is MERARRLANK…LNGFGSQVRT (66 aa). Lys773 is modified (N6-(pyridoxal phosphate)lysine).

This sequence belongs to the GcvP family. In terms of assembly, homodimer. The glycine cleavage system is composed of four proteins: P, T, L and H. The cofactor is pyridoxal 5'-phosphate. Expressed in leaves, stems and roots.

Its subcellular location is the mitochondrion. The enzyme catalyses N(6)-[(R)-lipoyl]-L-lysyl-[glycine-cleavage complex H protein] + glycine + H(+) = N(6)-[(R)-S(8)-aminomethyldihydrolipoyl]-L-lysyl-[glycine-cleavage complex H protein] + CO2. Its function is as follows. The glycine cleavage system catalyzes the degradation of glycine. The P protein binds the alpha-amino group of glycine through its pyridoxal phosphate cofactor; CO(2) is released and the remaining methylamine moiety is then transferred to the lipoamide cofactor of the H protein. The protein is Glycine dehydrogenase (decarboxylating) A, mitochondrial (GDCSPA) of Flaveria pringlei.